Reading from the N-terminus, the 251-residue chain is Triosephosphate isomerase (251 aa).

A substrate-binding site is contributed by 9-11; it reads NWK. Histidine 95 acts as the Electrophile in catalysis. The Proton acceptor role is filled by glutamate 167. Substrate is bound by residues glycine 173, serine 213, and 234–235; that span reads GG.

Belongs to the triosephosphate isomerase family. Homodimer.

It localises to the cytoplasm. The catalysed reaction is D-glyceraldehyde 3-phosphate = dihydroxyacetone phosphate. It functions in the pathway carbohydrate biosynthesis; gluconeogenesis. It participates in carbohydrate degradation; glycolysis; D-glyceraldehyde 3-phosphate from glycerone phosphate: step 1/1. Functionally, involved in the gluconeogenesis. Catalyzes stereospecifically the conversion of dihydroxyacetone phosphate (DHAP) to D-glyceraldehyde-3-phosphate (G3P). This chain is Triosephosphate isomerase, found in Pediococcus pentosaceus (strain ATCC 25745 / CCUG 21536 / LMG 10740 / 183-1w).